Reading from the N-terminus, the 258-residue chain is Hydroxyacylglutathione hydrolase cytoplasmic (258 aa).

Residues His54 and His56 each contribute to the Zn(2+) site. The Fe cation site is built by Asp58 and His59. 2 residues coordinate Zn(2+): His112 and Asp135. Asp135 serves as a coordination point for Fe cation. Residues 144–146 (KFF) and 174–176 (HEY) contribute to the substrate site. His174 lines the Fe cation pocket.

This sequence belongs to the metallo-beta-lactamase superfamily. Glyoxalase II family. In terms of assembly, homodimer. The cofactor is Fe(2+). It depends on Zn(2+) as a cofactor. Requires Fe(3+) as cofactor. Mainly expressed in flowers and flower buds. Also detected in roots and leaves.

It is found in the cytoplasm. The enzyme catalyses an S-(2-hydroxyacyl)glutathione + H2O = a 2-hydroxy carboxylate + glutathione + H(+). The protein operates within secondary metabolite metabolism; methylglyoxal degradation; (R)-lactate from methylglyoxal: step 2/2. In terms of biological role, thiolesterase that catalyzes the hydrolysis of S-D-lactoyl-glutathione to form glutathione and D-lactic acid. The protein is Hydroxyacylglutathione hydrolase cytoplasmic (GLX2-2) of Arabidopsis thaliana (Mouse-ear cress).